The primary structure comprises 238 residues: Urease subunit alpha (238 aa).

The tract at residues 1-102 (MKLTPKELDK…LVTVHTPIES (102 aa)) is urease gamma. The segment at 103-238 (KGKLVPGELF…DDNYVKTIKE (136 aa)) is urease beta.

In the N-terminal section; belongs to the urease gamma subunit family. This sequence in the C-terminal section; belongs to the urease beta subunit family. In terms of assembly, heterohexamer of 3 UreA (alpha) and 3 UreB (beta) subunits.

Its subcellular location is the cytoplasm. The catalysed reaction is urea + 2 H2O + H(+) = hydrogencarbonate + 2 NH4(+). Its pathway is nitrogen metabolism; urea degradation; CO(2) and NH(3) from urea (urease route): step 1/1. The polypeptide is Urease subunit alpha (Helicobacter acinonychis (strain Sheeba)).